The chain runs to 434 residues: Enolase (434 aa).

Gln-167 contributes to the (2R)-2-phosphoglycerate binding site. The active-site Proton donor is Glu-209. Residues Asp-246, Glu-291, and Asp-318 each contribute to the Mg(2+) site. Lys-343, Arg-372, Ser-373, and Lys-394 together coordinate (2R)-2-phosphoglycerate. The active-site Proton acceptor is Lys-343.

The protein belongs to the enolase family. Component of the RNA degradosome, a multiprotein complex involved in RNA processing and mRNA degradation. Mg(2+) serves as cofactor.

The protein localises to the cytoplasm. It localises to the secreted. The protein resides in the cell surface. It carries out the reaction (2R)-2-phosphoglycerate = phosphoenolpyruvate + H2O. The protein operates within carbohydrate degradation; glycolysis; pyruvate from D-glyceraldehyde 3-phosphate: step 4/5. In terms of biological role, catalyzes the reversible conversion of 2-phosphoglycerate (2-PG) into phosphoenolpyruvate (PEP). It is essential for the degradation of carbohydrates via glycolysis. This chain is Enolase, found in Buchnera aphidicola subsp. Acyrthosiphon pisum (strain 5A).